A 1022-amino-acid chain; its full sequence is Antigenic heat-stable 120 kDa protein (1022 aa).

Disordered regions lie at residues 1 to 41 (MSKD…QTTT) and 355 to 403 (GQSK…PQSQ). Over residues 19–34 (EYTEEQKQTLEQEQKE) the composition is skewed to basic and acidic residues. Polar residues-rich tracts occupy residues 355-380 (GQSKEQPLITPQQTTSSSVEPPQYKQ) and 387-403 (PTNQPLQPETSQMPQSQ).

The protein resides in the cytoplasm. This chain is Antigenic heat-stable 120 kDa protein (sca4), found in Rickettsia conorii (strain ATCC VR-613 / Malish 7).